Consider the following 184-residue polypeptide: Photosystem I assembly protein Ycf4 (184 aa).

Transmembrane regions (helical) follow at residues 22 to 42 (LCWAFILVLGAIGFSLVGFSS) and 64 to 84 (IVMCFYGIAGIFLGFYLWCTI).

The protein belongs to the Ycf4 family.

It localises to the plastid. Its subcellular location is the chloroplast thylakoid membrane. Functionally, seems to be required for the assembly of the photosystem I complex. The chain is Photosystem I assembly protein Ycf4 from Angiopteris evecta (Mule's foot fern).